The chain runs to 74 residues: M-myrmeciitoxin-Mb1a (74 aa).

A signal peptide spans 1 to 26; the sequence is MKLSCLLLTLAIIVVLTIVHAPNVEA. The propeptide occupies 27-50; the sequence is KALADPESDAVGFADAVGEADPNA. Position 73 is a glutamine amide (Q73).

This sequence belongs to the formicidae venom precursor-01 superfamily. Ant pilosulin family. In terms of tissue distribution, expressed by the venom gland.

It is found in the secreted. Its function is as follows. Shows moderate activity against E.coli and S.aureus (MIC&lt;25 uM), slight activity against B.subtilis (MIC&lt;50 uM), and no activity against L.garvieae, P.aeruginosa, C.albicans, and S.cerevisiae. Has no hemolytic nor cytolytic activity. Causes an IgE-independent histamine release. The protein is M-myrmeciitoxin-Mb1a of Myrmecia banksi (Jack jumper ant).